The chain runs to 79 residues: uncharacterized protein (79 aa).

The tract at residues 51 to 79 (PAQFPKVQRPPTLLGGKNTSTQTTLHPVI) is disordered. Polar residues predominate over residues 67–79 (KNTSTQTTLHPVI).

This is an uncharacterized protein from Homo sapiens (Human).